We begin with the raw amino-acid sequence, 168 residues long: Cilia- and flagella-associated protein HOATZ (168 aa).

A disordered region spans residues 142–168; it reads PKDKVPKSKEVLSESGLRDQEEVKALE.

Belongs to the HOATZ family. As to expression, specifically expressed in tissues with motile cilia and flagella, such as brain ependyma, lung, testis, and oviduct but not in whole brain, liver,kidney, spleen, and eyeball.

Its subcellular location is the cytoplasm. The protein resides in the cell projection. It is found in the cilium. Its function is as follows. Required for motile ciliogenesis and flagellar genesis by mediating the maturation of the glycolytic enzyme ENO4. This is Cilia- and flagella-associated protein HOATZ from Mus musculus (Mouse).